A 163-amino-acid polypeptide reads, in one-letter code: MRRLYLFVLILATFLTTSHGIVDASQDFQHLRRGLQEEAGEDEERIKLSGFKLPKSFGKRFKQKLSTKTKAFATRAASRMFQKKKGPLYGKYYKNAGKPKRQTPQIAATGPAKPKVQSPEEAAAVPGPYGQSLEYRVAQKVPLREREAFNPAKLSKINEMIPV.

The first 20 residues, 1-20 (MRRLYLFVLILATFLTTSHG), serve as a signal peptide directing secretion. A RxLR-dEER motif is present at residues 33–45 (RGLQEEAGEDEER). The tract at residues 94–127 (KNAGKPKRQTPQIAATGPAKPKVQSPEEAAAVPG) is disordered.

The protein belongs to the RxLR effector family.

The protein localises to the secreted. It is found in the host nucleus. The protein resides in the host cytoplasm. Functionally, secreted effector that completely suppresses the host cell death induced by cell death-inducing proteins. In Plasmopara viticola (Downy mildew of grapevine), this protein is Secreted RxLR effector protein 135.